The following is an 825-amino-acid chain: Zinc finger protein 229 (825 aa).

Positions 1–26 are disordered; sequence METLTSRHEKRALHSQASAISQDREE. Positions 34–108 constitute a KRAB domain; it reads LSFKDVAVVF…SHKELSSCKI (75 aa). The segment at 291–315 adopts a C2H2-type 1; degenerate zinc-finger fold; it reads KLCQYDEFSEGLRHSAHLNRHQRVP. 7 C2H2-type zinc fingers span residues 349 to 371, 377 to 399, 405 to 427, 433 to 455, 461 to 483, 489 to 511, and 517 to 539; these read YRCD…QGVH, YKCE…QRVH, YKCS…QRLH, YTCS…QHIH, YSCG…QKTH, YQCD…QRVH, and YKCN…QRLH. A Glycyl lysine isopeptide (Lys-Gly) (interchain with G-Cter in SUMO2) cross-link involves residue Lys-543. 10 C2H2-type zinc fingers span residues 545–566, 572–594, 600–622, 628–650, 656–678, 684–706, 712–734, 740–762, 768–790, and 796–818; these read YKCE…QRVH, YKCS…QRVH, YVCD…QRVH, YKCA…QRVH, YRCQ…QRVH, YTCD…QRLH, YTCC…KRVH, YRCH…QRVH, and YTCG…QRVH.

It belongs to the krueppel C2H2-type zinc-finger protein family.

Its subcellular location is the nucleus. In terms of biological role, may be involved in transcriptional regulation. The protein is Zinc finger protein 229 of Homo sapiens (Human).